The following is a 180-amino-acid chain: Ribosome-recycling factor (180 aa).

It belongs to the RRF family.

The protein localises to the cytoplasm. In terms of biological role, responsible for the release of ribosomes from messenger RNA at the termination of protein biosynthesis. May increase the efficiency of translation by recycling ribosomes from one round of translation to another. The chain is Ribosome-recycling factor from Chlamydia caviae (strain ATCC VR-813 / DSM 19441 / 03DC25 / GPIC) (Chlamydophila caviae).